We begin with the raw amino-acid sequence, 236 residues long: Alpha-acetolactate decarboxylase (236 aa).

This sequence belongs to the alpha-acetolactate decarboxylase family.

The enzyme catalyses (2S)-2-acetolactate + H(+) = (R)-acetoin + CO2. Its pathway is polyol metabolism; (R,R)-butane-2,3-diol biosynthesis; (R,R)-butane-2,3-diol from pyruvate: step 2/3. Its function is as follows. Converts acetolactate into acetoin. In Lactococcus lactis subsp. cremoris (strain MG1363), this protein is Alpha-acetolactate decarboxylase (aldB).